The primary structure comprises 111 residues: Urease subunit beta (111 aa).

It belongs to the urease beta subunit family. In terms of assembly, heterotrimer of UreA (gamma), UreB (beta) and UreC (alpha) subunits. Three heterotrimers associate to form the active enzyme.

The protein resides in the cytoplasm. It catalyses the reaction urea + 2 H2O + H(+) = hydrogencarbonate + 2 NH4(+). It functions in the pathway nitrogen metabolism; urea degradation; CO(2) and NH(3) from urea (urease route): step 1/1. The chain is Urease subunit beta from Geobacillus kaustophilus (strain HTA426).